The chain runs to 122 residues: Large ribosomal subunit protein uL14 (122 aa).

This sequence belongs to the universal ribosomal protein uL14 family. Part of the 50S ribosomal subunit. Forms a cluster with proteins L3 and L19. In the 70S ribosome, L14 and L19 interact and together make contacts with the 16S rRNA in bridges B5 and B8.

Its function is as follows. Binds to 23S rRNA. Forms part of two intersubunit bridges in the 70S ribosome. In Heliobacterium modesticaldum (strain ATCC 51547 / Ice1), this protein is Large ribosomal subunit protein uL14.